Reading from the N-terminus, the 37-residue chain is Photosystem II reaction center protein M (37 aa).

Residues Ile-5–Ile-25 traverse the membrane as a helical segment.

It belongs to the PsbM family. As to quaternary structure, PSII is composed of 1 copy each of membrane proteins PsbA, PsbB, PsbC, PsbD, PsbE, PsbF, PsbH, PsbI, PsbJ, PsbK, PsbL, PsbM, PsbT, PsbX, PsbY, PsbZ, Psb30/Ycf12, at least 3 peripheral proteins of the oxygen-evolving complex and a large number of cofactors. It forms dimeric complexes.

It localises to the plastid. Its subcellular location is the chloroplast thylakoid membrane. In terms of biological role, one of the components of the core complex of photosystem II (PSII). PSII is a light-driven water:plastoquinone oxidoreductase that uses light energy to abstract electrons from H(2)O, generating O(2) and a proton gradient subsequently used for ATP formation. It consists of a core antenna complex that captures photons, and an electron transfer chain that converts photonic excitation into a charge separation. This subunit is found at the monomer-monomer interface. The polypeptide is Photosystem II reaction center protein M (Pelargonium hortorum (Common geranium)).